Reading from the N-terminus, the 196-residue chain is Probable inactive nicotinamidase At3g16190 (196 aa).

This sequence belongs to the isochorismatase family.

In terms of biological role, does not possess nicotinamidase activity in vitro. The sequence is that of Probable inactive nicotinamidase At3g16190 from Arabidopsis thaliana (Mouse-ear cress).